Reading from the N-terminus, the 74-residue chain is Cytochrome b (74 aa).

The chain crosses the membrane as a helical span at residues 34 to 54 (FGSLLAICLVTQILTGLLLAM).

The protein belongs to the cytochrome b family. In terms of assembly, the cytochrome bc1 complex contains 11 subunits: 3 respiratory subunits (MT-CYB, CYC1 and UQCRFS1), 2 core proteins (UQCRC1 and UQCRC2) and 6 low-molecular weight proteins (UQCRH/QCR6, UQCRB/QCR7, UQCRQ/QCR8, UQCR10/QCR9, UQCR11/QCR10 and a cleavage product of UQCRFS1). This cytochrome bc1 complex then forms a dimer. Heme is required as a cofactor.

The protein resides in the mitochondrion inner membrane. Its function is as follows. Component of the ubiquinol-cytochrome c reductase complex (complex III or cytochrome b-c1 complex) that is part of the mitochondrial respiratory chain. The b-c1 complex mediates electron transfer from ubiquinol to cytochrome c. Contributes to the generation of a proton gradient across the mitochondrial membrane that is then used for ATP synthesis. The sequence is that of Cytochrome b (MT-CYB) from Anser caerulescens (Snow goose).